A 386-amino-acid polypeptide reads, in one-letter code: MDLMEYQAKELFAKHDVPVTLGIVAHTPDEAQAAAEQLGVVVVKAQVKAGGRGKAGGVKLAKTPEEARTHAEAILGMEIKGLRVNRVLIAPAASIEEEYYFSFLLDRANRRYLCIASVEGGVEIEEVAKTNPDAVRQIPIDPGAGVDEAKAREIVADAKFPEALTEQAVQTVLALWKVFVEEDATLVEVNPLARLAGDKLEALDGKVSLDENAEFRHEEHASFVIREEEDPLESAAKDKGLNYVKLDGSVGIIGNGAGLVMSTLDVVAYAGEKHGGVKPANFLDIGGGANAQVMADGLHVILGDEQVKAVFVNVFGGITACDEVANGIVGALDILGEDATKPLVIRLDGNNADEGRRILTEAAHPLVTMVDTMDGAADKAAELANA.

In terms of domain architecture, ATP-grasp spans 9-235 (KELFAKHDVP…REEEDPLESA (227 aa)). Residues Lys-44, 51–53 (GRG), Ala-93, and Glu-98 each bind ATP. Asn-190 and Asp-204 together coordinate Mg(2+). Substrate is bound by residues Asn-255 and 317 to 319 (GIT).

This sequence belongs to the succinate/malate CoA ligase beta subunit family. As to quaternary structure, heterotetramer of two alpha and two beta subunits. It depends on Mg(2+) as a cofactor.

It carries out the reaction succinate + ATP + CoA = succinyl-CoA + ADP + phosphate. It catalyses the reaction GTP + succinate + CoA = succinyl-CoA + GDP + phosphate. It functions in the pathway carbohydrate metabolism; tricarboxylic acid cycle; succinate from succinyl-CoA (ligase route): step 1/1. Functionally, succinyl-CoA synthetase functions in the citric acid cycle (TCA), coupling the hydrolysis of succinyl-CoA to the synthesis of either ATP or GTP and thus represents the only step of substrate-level phosphorylation in the TCA. The beta subunit provides nucleotide specificity of the enzyme and binds the substrate succinate, while the binding sites for coenzyme A and phosphate are found in the alpha subunit. In Nocardioides sp. (strain ATCC BAA-499 / JS614), this protein is Succinate--CoA ligase [ADP-forming] subunit beta.